Here is a 265-residue protein sequence, read N- to C-terminus: uncharacterized protein (265 aa).

The a divalent metal cation site is built by histidine 7, histidine 9, glutamate 95, histidine 131, histidine 156, and aspartate 206.

The protein belongs to the metallo-dependent hydrolases superfamily. TatD-type hydrolase family. The cofactor is a divalent metal cation.

This is an uncharacterized protein from Buchnera aphidicola subsp. Baizongia pistaciae (strain Bp).